Reading from the N-terminus, the 225-residue chain is Heptaprenylglyceryl phosphate synthase (225 aa).

Position 6 (K6) interacts with sn-glycerol 1-phosphate. 2 residues coordinate Mg(2+): D8 and T34. Sn-glycerol 1-phosphate is bound by residues 153-158 (YVEYSG), G183, and 203-204 (GN).

It belongs to the GGGP/HepGP synthase family. Group I subfamily. As to quaternary structure, homodimer. Mg(2+) serves as cofactor.

It carries out the reaction sn-glycerol 1-phosphate + all-trans-heptaprenyl diphosphate = 3-heptaprenyl-sn-glycero-1-phosphate + diphosphate. Its pathway is membrane lipid metabolism; glycerophospholipid metabolism. Its function is as follows. Prenyltransferase that catalyzes in vivo the transfer of the heptaprenyl moiety of heptaprenyl pyrophosphate (HepPP; 35 carbon atoms) to the C3 hydroxyl of sn-glycerol-1-phosphate (G1P), producing heptaprenylglyceryl phosphate (HepGP). This reaction is an ether-bond-formation step in the biosynthesis of archaea-type G1P-based membrane lipids found in Bacillales. To a much lesser extent, is also able to use geranylgeranyl diphosphate (GGPP; C20) as the prenyl donor. This chain is Heptaprenylglyceryl phosphate synthase, found in Listeria monocytogenes serovar 1/2a (strain ATCC BAA-679 / EGD-e).